Consider the following 353-residue polypeptide: Putative ABC transporter ATP-binding protein MG303 homolog (353 aa).

The ABC transporter domain maps to 72 to 312; it reads LYFYNLSVFV…MQLLQRYEIT (241 aa). 107-114 provides a ligand contact to ATP; the sequence is GPSGSGKT.

The protein belongs to the ABC transporter superfamily.

The protein is Putative ABC transporter ATP-binding protein MG303 homolog of Mycoplasma pneumoniae (strain ATCC 29342 / M129 / Subtype 1) (Mycoplasmoides pneumoniae).